The primary structure comprises 486 residues: Membrane-bound lytic murein transglycosylase F (486 aa).

The first 21 residues, 1-21, serve as a signal peptide directing secretion; that stretch reads MTRIKLSYFTIGLVALLLALA. The non-LT domain stretch occupies residues 22 to 268; the sequence is LWPNIPWRNG…RLEEKYLGHV (247 aa). The tract at residues 269–486 is LT domain; sequence GSFDYVDTKT…VVGPGWSIGD (218 aa). Glu-313 is an active-site residue.

This sequence in the N-terminal section; belongs to the bacterial solute-binding protein 3 family. In the C-terminal section; belongs to the transglycosylase Slt family.

It localises to the cell outer membrane. The enzyme catalyses Exolytic cleavage of the (1-&gt;4)-beta-glycosidic linkage between N-acetylmuramic acid (MurNAc) and N-acetylglucosamine (GlcNAc) residues in peptidoglycan, from either the reducing or the non-reducing ends of the peptidoglycan chains, with concomitant formation of a 1,6-anhydrobond in the MurNAc residue.. In terms of biological role, murein-degrading enzyme that degrades murein glycan strands and insoluble, high-molecular weight murein sacculi, with the concomitant formation of a 1,6-anhydromuramoyl product. Lytic transglycosylases (LTs) play an integral role in the metabolism of the peptidoglycan (PG) sacculus. Their lytic action creates space within the PG sacculus to allow for its expansion as well as for the insertion of various structures such as secretion systems and flagella. The polypeptide is Membrane-bound lytic murein transglycosylase F (Yersinia pseudotuberculosis serotype I (strain IP32953)).